The sequence spans 392 residues: Formate-dependent phosphoribosylglycinamide formyltransferase (392 aa).

N(1)-(5-phospho-beta-D-ribosyl)glycinamide is bound by residues glutamate 15 to leucine 16 and glutamate 75. Residues arginine 107, lysine 148, serine 153–glutamine 158, glutamate 188–leucine 191, and glutamate 196 each bind ATP. The 191-residue stretch at aspartate 112 to leucine 302 folds into the ATP-grasp domain. Glutamate 261 and glutamate 273 together coordinate Mg(2+). N(1)-(5-phospho-beta-D-ribosyl)glycinamide contacts are provided by residues aspartate 280, lysine 350, and arginine 357–arginine 358.

This sequence belongs to the PurK/PurT family. In terms of assembly, homodimer.

It catalyses the reaction N(1)-(5-phospho-beta-D-ribosyl)glycinamide + formate + ATP = N(2)-formyl-N(1)-(5-phospho-beta-D-ribosyl)glycinamide + ADP + phosphate + H(+). It participates in purine metabolism; IMP biosynthesis via de novo pathway; N(2)-formyl-N(1)-(5-phospho-D-ribosyl)glycinamide from N(1)-(5-phospho-D-ribosyl)glycinamide (formate route): step 1/1. Functionally, involved in the de novo purine biosynthesis. Catalyzes the transfer of formate to 5-phospho-ribosyl-glycinamide (GAR), producing 5-phospho-ribosyl-N-formylglycinamide (FGAR). Formate is provided by PurU via hydrolysis of 10-formyl-tetrahydrofolate. The sequence is that of Formate-dependent phosphoribosylglycinamide formyltransferase from Synechococcus sp. (strain CC9605).